The primary structure comprises 650 residues: Acetyl-coenzyme A synthetase (650 aa).

Residues 191-194 (RGGR), T311, and N335 each bind CoA. ATP is bound by residues 387–389 (GEP), 411–416 (DTWWQT), D500, and R515. S523 provides a ligand contact to CoA. R526 serves as a coordination point for ATP. Mg(2+) contacts are provided by V537, H539, and V542. R584 is a CoA binding site. K609 is modified (N6-acetyllysine).

It belongs to the ATP-dependent AMP-binding enzyme family. Mg(2+) serves as cofactor. In terms of processing, acetylated. Deacetylation by the SIR2-homolog deacetylase activates the enzyme.

It carries out the reaction acetate + ATP + CoA = acetyl-CoA + AMP + diphosphate. Functionally, catalyzes the conversion of acetate into acetyl-CoA (AcCoA), an essential intermediate at the junction of anabolic and catabolic pathways. AcsA undergoes a two-step reaction. In the first half reaction, AcsA combines acetate with ATP to form acetyl-adenylate (AcAMP) intermediate. In the second half reaction, it can then transfer the acetyl group from AcAMP to the sulfhydryl group of CoA, forming the product AcCoA. The sequence is that of Acetyl-coenzyme A synthetase from Shewanella sp. (strain MR-4).